A 190-amino-acid chain; its full sequence is Potassium-transporting ATPase KdpC subunit (190 aa).

The chain crosses the membrane as a helical span at residues 11 to 31 (LIVLMSLITGVAYPLVVTGVA).

This sequence belongs to the KdpC family. As to quaternary structure, the system is composed of three essential subunits: KdpA, KdpB and KdpC.

Its subcellular location is the cell inner membrane. Part of the high-affinity ATP-driven potassium transport (or Kdp) system, which catalyzes the hydrolysis of ATP coupled with the electrogenic transport of potassium into the cytoplasm. This subunit acts as a catalytic chaperone that increases the ATP-binding affinity of the ATP-hydrolyzing subunit KdpB by the formation of a transient KdpB/KdpC/ATP ternary complex. The sequence is that of Potassium-transporting ATPase KdpC subunit from Pseudomonas savastanoi pv. phaseolicola (strain 1448A / Race 6) (Pseudomonas syringae pv. phaseolicola (strain 1448A / Race 6)).